The chain runs to 116 residues: Large ribosomal subunit protein bL21c (116 aa).

This sequence belongs to the bacterial ribosomal protein bL21 family. As to quaternary structure, part of the 50S ribosomal subunit.

The protein resides in the plastid. It localises to the chloroplast. Functionally, this protein binds to 23S rRNA. In Emiliania huxleyi (Coccolithophore), this protein is Large ribosomal subunit protein bL21c.